The chain runs to 564 residues: Lamassu protein LmuB (564 aa).

Its function is as follows. Component of antiviral defense system Lamassu type II, composed of LmuA and LmuB. Expression of Lamassu type II in B.subtilis (strain BEST7003) confers resistance to phage SpBeta. May be an ATPase. The polypeptide is Lamassu protein LmuB (Bacillus cereus (strain VD014)).